Here is a 204-residue protein sequence, read N- to C-terminus: Dephospho-CoA kinase (204 aa).

One can recognise a DPCK domain in the interval 4 to 201 (VIGLTGGIAS…EKYLAMCKKN (198 aa)). Residue 12–17 (ASGKTT) coordinates ATP.

This sequence belongs to the CoaE family.

The protein localises to the cytoplasm. It carries out the reaction 3'-dephospho-CoA + ATP = ADP + CoA + H(+). Its pathway is cofactor biosynthesis; coenzyme A biosynthesis; CoA from (R)-pantothenate: step 5/5. Its function is as follows. Catalyzes the phosphorylation of the 3'-hydroxyl group of dephosphocoenzyme A to form coenzyme A. In Vibrio parahaemolyticus serotype O3:K6 (strain RIMD 2210633), this protein is Dephospho-CoA kinase.